The following is a 197-amino-acid chain: Sodium/potassium-transporting ATPase subunit beta-1-interacting protein 3 (197 aa).

4 consecutive transmembrane segments (helical) span residues 2-22 (GCCT…VSAL), 35-55 (APIL…FGTI), 62-82 (IMVY…IICF), and 152-172 (VQIL…SISM).

Belongs to the NKAIN family. As to quaternary structure, interacts with ATP1B1.

The protein localises to the cell membrane. In Homo sapiens (Human), this protein is Sodium/potassium-transporting ATPase subunit beta-1-interacting protein 3 (NKAIN3).